The chain runs to 506 residues: Probable alpha-L-arabinofuranosidase B (506 aa).

The first 26 residues, 1-26 (MLSQPSRERAFVLALGLVVSSSLAAA), serve as a signal peptide directing secretion. Positions 27 to 343 (APCDIYSSGG…ADIVAANYAV (317 aa)) are catalytic. 3 disulfide bridges follow: C29-C39, C89-C94, and C184-C185. D227 provides a ligand contact to substrate. The active-site Nucleophile is E229. Residue N230 coordinates substrate. N285 carries N-linked (GlcNAc...) asparagine glycosylation. Position 304 (G304) interacts with substrate. The active-site Proton donor is the D305. Residues 344–506 (TSLTSGPALT…VSWVISSGFA (163 aa)) are ABD. C409 and C447 are joined by a disulfide. Positions 424, 426, 427, 443, 471, 476, and 496 each coordinate substrate.

This sequence belongs to the glycosyl hydrolase 54 family.

Its subcellular location is the secreted. The enzyme catalyses Hydrolysis of terminal non-reducing alpha-L-arabinofuranoside residues in alpha-L-arabinosides.. The protein operates within glycan metabolism; L-arabinan degradation. Its function is as follows. Alpha-L-arabinofuranosidase involved in the degradation of arabinoxylan, a major component of plant hemicellulose. Able to hydrolyze 1,5-, 1,3- and 1,2-alpha-linkages not only in L-arabinofuranosyl oligosaccharides, but also in polysaccharides containing terminal non-reducing L-arabinofuranoses in side chains, like L-arabinan, arabinogalactan and arabinoxylan. The chain is Probable alpha-L-arabinofuranosidase B (abfB) from Aspergillus clavatus (strain ATCC 1007 / CBS 513.65 / DSM 816 / NCTC 3887 / NRRL 1 / QM 1276 / 107).